The primary structure comprises 306 residues: N-acetylmuramic acid 6-phosphate etherase (306 aa).

An SIS domain is found at 60–223 (TAAALRGGGR…STGAMVRLGK (164 aa)). Glu88 serves as the catalytic Proton donor. The active site involves Glu119.

This sequence belongs to the GCKR-like family. MurNAc-6-P etherase subfamily. In terms of assembly, homodimer.

It catalyses the reaction N-acetyl-D-muramate 6-phosphate + H2O = N-acetyl-D-glucosamine 6-phosphate + (R)-lactate. Its pathway is amino-sugar metabolism; N-acetylmuramate degradation. Its function is as follows. Specifically catalyzes the cleavage of the D-lactyl ether substituent of MurNAc 6-phosphate, producing GlcNAc 6-phosphate and D-lactate. This chain is N-acetylmuramic acid 6-phosphate etherase, found in Gloeobacter violaceus (strain ATCC 29082 / PCC 7421).